We begin with the raw amino-acid sequence, 554 residues long: 3-(3-hydroxy-phenyl)propionate/3-hydroxycinnamic acid hydroxylase (554 aa).

Residues 17–46 (QVAI…LVEK) and 285–295 (FRIDRVLLAGD) each bind FAD.

It belongs to the PheA/TfdB FAD monooxygenase family. FAD serves as cofactor.

It catalyses the reaction 3-(3-hydroxyphenyl)propanoate + NADH + O2 + H(+) = 3-(2,3-dihydroxyphenyl)propanoate + NAD(+) + H2O. The enzyme catalyses (2E)-3-(3-hydroxyphenyl)prop-2-enoate + NADH + O2 + H(+) = (2E)-3-(2,3-dihydroxyphenyl)prop-2-enoate + NAD(+) + H2O. The protein operates within aromatic compound metabolism; 3-phenylpropanoate degradation. In terms of biological role, catalyzes the insertion of one atom of molecular oxygen into position 2 of the phenyl ring of 3-(3-hydroxyphenyl)propionate (3-HPP) and hydroxycinnamic acid (3HCI). The protein is 3-(3-hydroxy-phenyl)propionate/3-hydroxycinnamic acid hydroxylase of Klebsiella pneumoniae (strain 342).